The primary structure comprises 170 residues: Brassinosteroid-responsive RING protein 1 (170 aa).

The chain crosses the membrane as a helical span at residues 15 to 37 (LFVQTLSILGFIRTIVFSIFRFL). Residues 94–137 (CAVCLYEFEGEQEIRWLRNCRHIFHRSCLDRWMDHDQKTCPLCR) form an RING-type; atypical zinc finger.

It belongs to the RING-type zinc finger family. In terms of tissue distribution, highly expressed in stems, rosette leaves and siliques, and moderately expressed in roots, cauline leaves and flower. Detected at low levels in seeds.

Its subcellular location is the membrane. Functionally, may be involved in the brassinosteroids (BRs) signaling pathway and regulate the growth and development of rosette leaves. Seems to prevent over development of leaves and inflorescence stems. This Arabidopsis thaliana (Mouse-ear cress) protein is Brassinosteroid-responsive RING protein 1.